A 163-amino-acid polypeptide reads, in one-letter code: Probable ribosome biogenesis protein RLP24 (163 aa).

The protein belongs to the eukaryotic ribosomal protein eL24 family. In terms of assembly, associated with nucleolar and cytoplasmic pre-60S particles. At the end of biogenesis it dissociates from cytoplasmic pre-60S particles and is likely to be exchanged for its ribosomal homolog, RPL24.

It is found in the nucleus. The protein localises to the nucleolus. In terms of biological role, involved in the biogenesis of the 60S ribosomal subunit. Ensures the docking of GTPBP4/NOG1 to pre-60S particles. In Rattus norvegicus (Rat), this protein is Probable ribosome biogenesis protein RLP24 (Rsl24d1).